The primary structure comprises 177 residues: MKLPKEGDFITIQSYKHDGNLHRTWRDTMVLKTTENAIIGVNDHTLVTESDGRRWVTREPAIVYFHKKYWFNIIAMIRDNGTSYYCNLASPYYLDNEALKYIDYDLDVKVFADGEKRLLDVEEYERHKKQMHYSDDLDFILKENVKILVDWINNGRGPFSDAYVNIWYKRYVELKNR.

Catalysis depends on arginine 23, which acts as the Proton donor. Asparagine 87, aspartate 103, aspartate 105, aspartate 107, aspartate 120, and glutamate 123 together coordinate Mg(2+).

The protein belongs to the Ntdp family. It depends on Mg(2+) as a cofactor.

It catalyses the reaction a ribonucleoside 5'-triphosphate + H2O = a ribonucleoside 5'-diphosphate + phosphate + H(+). It carries out the reaction a ribonucleoside 5'-diphosphate + H2O = a ribonucleoside 5'-phosphate + phosphate + H(+). Has nucleoside phosphatase activity towards nucleoside triphosphates and nucleoside diphosphates. The chain is Nucleoside triphosphate/diphosphate phosphatase from Streptococcus sanguinis (strain SK36).